An 89-amino-acid chain; its full sequence is Small ribosomal subunit protein uS15 (89 aa).

The segment covering 1-21 has biased composition (basic and acidic residues); it reads MALSKEQKTETLKEFGLHETD. Residues 1-22 form a disordered region; the sequence is MALSKEQKTETLKEFGLHETDT.

Belongs to the universal ribosomal protein uS15 family. In terms of assembly, part of the 30S ribosomal subunit. Forms a bridge to the 50S subunit in the 70S ribosome, contacting the 23S rRNA.

Functionally, one of the primary rRNA binding proteins, it binds directly to 16S rRNA where it helps nucleate assembly of the platform of the 30S subunit by binding and bridging several RNA helices of the 16S rRNA. In terms of biological role, forms an intersubunit bridge (bridge B4) with the 23S rRNA of the 50S subunit in the ribosome. In Corynebacterium jeikeium (strain K411), this protein is Small ribosomal subunit protein uS15.